A 440-amino-acid chain; its full sequence is Streptokinase (440 aa).

The signal sequence occupies residues 1–26 (MKNYLSFGMFALLFALTFGTVKPVQA). Positions 72-94 (PAQGGKTEQGLRPKSKPLATDKG) are disordered.

Functionally, this protein is not a protease, but it activates plasminogen by complexing with it. As a potential virulence factor, it is thought to prevent the formation of effective fibrin barriers around the site of infection, thereby contributing to the invasiveness of the cells. The polypeptide is Streptokinase (ska) (Streptococcus pyogenes).